We begin with the raw amino-acid sequence, 242 residues long: UDP-2,3-diacylglucosamine hydrolase (242 aa).

Residues D8, H10, D41, N79, and H114 each coordinate Mn(2+). 79-80 (NR) is a substrate binding site. D122, K164, K167, and H195 together coordinate substrate. Mn(2+)-binding residues include H195 and H197.

The protein belongs to the LpxH family. The cofactor is Mn(2+).

The protein localises to the cell inner membrane. It catalyses the reaction UDP-2-N,3-O-bis[(3R)-3-hydroxytetradecanoyl]-alpha-D-glucosamine + H2O = 2-N,3-O-bis[(3R)-3-hydroxytetradecanoyl]-alpha-D-glucosaminyl 1-phosphate + UMP + 2 H(+). It functions in the pathway glycolipid biosynthesis; lipid IV(A) biosynthesis; lipid IV(A) from (3R)-3-hydroxytetradecanoyl-[acyl-carrier-protein] and UDP-N-acetyl-alpha-D-glucosamine: step 4/6. Hydrolyzes the pyrophosphate bond of UDP-2,3-diacylglucosamine to yield 2,3-diacylglucosamine 1-phosphate (lipid X) and UMP by catalyzing the attack of water at the alpha-P atom. Involved in the biosynthesis of lipid A, a phosphorylated glycolipid that anchors the lipopolysaccharide to the outer membrane of the cell. The chain is UDP-2,3-diacylglucosamine hydrolase from Vibrio cholerae serotype O1 (strain ATCC 39315 / El Tor Inaba N16961).